Consider the following 275-residue polypeptide: Thiazole synthase (275 aa).

Residue lysine 108 is the Schiff-base intermediate with DXP of the active site. 1-deoxy-D-xylulose 5-phosphate-binding positions include glycine 169, 196-197, and 218-219; these read AG and NT.

The protein belongs to the ThiG family. In terms of assembly, homotetramer. Forms heterodimers with either ThiH or ThiS.

The protein localises to the cytoplasm. The catalysed reaction is [ThiS sulfur-carrier protein]-C-terminal-Gly-aminoethanethioate + 2-iminoacetate + 1-deoxy-D-xylulose 5-phosphate = [ThiS sulfur-carrier protein]-C-terminal Gly-Gly + 2-[(2R,5Z)-2-carboxy-4-methylthiazol-5(2H)-ylidene]ethyl phosphate + 2 H2O + H(+). It participates in cofactor biosynthesis; thiamine diphosphate biosynthesis. In terms of biological role, catalyzes the rearrangement of 1-deoxy-D-xylulose 5-phosphate (DXP) to produce the thiazole phosphate moiety of thiamine. Sulfur is provided by the thiocarboxylate moiety of the carrier protein ThiS. In vitro, sulfur can be provided by H(2)S. The protein is Thiazole synthase of Ralstonia pickettii (strain 12J).